We begin with the raw amino-acid sequence, 576 residues long: Adenine deaminase 2 (576 aa).

This sequence belongs to the metallo-dependent hydrolases superfamily. Adenine deaminase family. The cofactor is Mn(2+).

The catalysed reaction is adenine + H2O + H(+) = hypoxanthine + NH4(+). The polypeptide is Adenine deaminase 2 (Desulfotalea psychrophila (strain LSv54 / DSM 12343)).